A 397-amino-acid chain; its full sequence is NADH-quinone oxidoreductase subunit H 1 (397 aa).

Transmembrane regions (helical) follow at residues 7–27, 84–104, 120–140, 156–176, 198–218, 258–278, 279–299, 313–333, 337–357, and 376–396; these read FIFISLVKAAVIFGVLMTTLA, PFLAITMALLSISVIPFGPVI, IGVLFILAVSSMGVYGIALAG, SAQMISYELPMSLAIAAPLLI, LLSGPFPQVISFIIFIIAAFA, MITVSAMATLLFLGGWMAPWP, AAYGSSLVPSILFGISGLVLL, TFPAFGIIFLGIAGIFLLPMV, LLPLFWFCAKTGAILFAFMWI, and FLFPVAMLNLLVTGFLVAWTT.

This sequence belongs to the complex I subunit 1 family. In terms of assembly, NDH-1 is composed of 14 different subunits. Subunits NuoA, H, J, K, L, M, N constitute the membrane sector of the complex.

It localises to the cell inner membrane. The catalysed reaction is a quinone + NADH + 5 H(+)(in) = a quinol + NAD(+) + 4 H(+)(out). Its function is as follows. NDH-1 shuttles electrons from NADH, via FMN and iron-sulfur (Fe-S) centers, to quinones in the respiratory chain. The immediate electron acceptor for the enzyme in this species is believed to be ubiquinone. Couples the redox reaction to proton translocation (for every two electrons transferred, four hydrogen ions are translocated across the cytoplasmic membrane), and thus conserves the redox energy in a proton gradient. This subunit may bind ubiquinone. The polypeptide is NADH-quinone oxidoreductase subunit H 1 (Solibacter usitatus (strain Ellin6076)).